Consider the following 277-residue polypeptide: Phosphoenolpyruvate synthase regulatory protein (277 aa).

157-164 (GVSRCGKT) is a binding site for ADP.

The protein belongs to the pyruvate, phosphate/water dikinase regulatory protein family. PSRP subfamily.

It carries out the reaction [pyruvate, water dikinase] + ADP = [pyruvate, water dikinase]-phosphate + AMP + H(+). The enzyme catalyses [pyruvate, water dikinase]-phosphate + phosphate + H(+) = [pyruvate, water dikinase] + diphosphate. Its function is as follows. Bifunctional serine/threonine kinase and phosphorylase involved in the regulation of the phosphoenolpyruvate synthase (PEPS) by catalyzing its phosphorylation/dephosphorylation. In Escherichia coli O1:K1 / APEC, this protein is Phosphoenolpyruvate synthase regulatory protein.